The primary structure comprises 1312 residues: Multidrug resistance protein 3 (1312 aa).

The helical transmembrane segment at 51–71 (GFIDYILLIGGIIGAMAAGVL) threads the bilayer. The ABC transmembrane type-1 1 domain maps to 59-369 (IGGIIGAMAA…VAMPINALST (311 aa)). An N-linked (GlcNAc...) asparagine glycan is attached at Asn98. A run of 5 helical transmembrane segments spans residues 127 to 147 (IYFA…FFVL), 197 to 217 (KFGV…IGFS), 224 to 244 (LVIM…GFFA), 302 to 322 (VVGV…ALGS), and 344 to 364 (MVVF…AMPI). Positions 404 to 643 (IKLEDVQFRY…KATYYGLVKR (240 aa)) constitute an ABC transporter 1 domain. Residue 439-446 (GASGCGKS) coordinates ATP. The ABC transmembrane type-1 2 domain maps to 724 to 1033 (LLSFLGLIGG…LGQMIPDVGK (310 aa)). 2 helical membrane passes run 725-745 (LSFL…FYMI) and 776-796 (IWIL…LGLF). Asn819 is a glycosylation site (N-linked (GlcNAc...) asparagine). Transmembrane regions (helical) follow at residues 852–872 (VGNV…AFYY), 874–894 (WKVA…VFLN), and 958–978 (AFVS…SFYI). One can recognise an ABC transporter 2 domain in the interval 1068–1307 (IEFKDICFRY…KGFYYTLAMQ (240 aa)). 1103–1110 (GASGCGKS) contributes to the ATP binding site.

This sequence belongs to the ABC transporter superfamily. ABCB family. Multidrug resistance exporter (TC 3.A.1.201) subfamily.

The protein resides in the membrane. It catalyses the reaction ATP + H2O + xenobioticSide 1 = ADP + phosphate + xenobioticSide 2.. In terms of biological role, energy-dependent efflux pump responsible for decreased drug accumulation in multidrug resistance parasites. The chain is Multidrug resistance protein 3 from Entamoeba histolytica (strain ATCC 30459 / HM-1:IMSS / ABRM).